Here is a 255-residue protein sequence, read N- to C-terminus: Ditrans,polycis-undecaprenyl-diphosphate synthase ((2E,6E)-farnesyl-diphosphate specific) (255 aa).

Residue Asp21 is part of the active site. A Mg(2+)-binding site is contributed by Asp21. Substrate-binding positions include 22–25 (GNGR), Trp26, Arg34, His38, and 66–68 (SSE). Asn69 serves as the catalytic Proton acceptor. Substrate-binding positions include Trp70, Arg72, Arg189, and 195–197 (RIS). Residue Glu208 coordinates Mg(2+).

This sequence belongs to the UPP synthase family. Homodimer. It depends on Mg(2+) as a cofactor.

The catalysed reaction is 8 isopentenyl diphosphate + (2E,6E)-farnesyl diphosphate = di-trans,octa-cis-undecaprenyl diphosphate + 8 diphosphate. Its function is as follows. Catalyzes the sequential condensation of isopentenyl diphosphate (IPP) with (2E,6E)-farnesyl diphosphate (E,E-FPP) to yield (2Z,6Z,10Z,14Z,18Z,22Z,26Z,30Z,34E,38E)-undecaprenyl diphosphate (di-trans,octa-cis-UPP). UPP is the precursor of glycosyl carrier lipid in the biosynthesis of bacterial cell wall polysaccharide components such as peptidoglycan and lipopolysaccharide. The chain is Ditrans,polycis-undecaprenyl-diphosphate synthase ((2E,6E)-farnesyl-diphosphate specific) from Xylella fastidiosa (strain Temecula1 / ATCC 700964).